We begin with the raw amino-acid sequence, 1056 residues long: Kinesin-like protein KIN-5A (1056 aa).

Positions 1-44 are disordered; it reads MDRRIGLTSPSPKSTEKSGRDLRSGGDANGGANTNSNSIPRGDK. Basic and acidic residues predominate over residues 14–24; sequence STEKSGRDLRS. A Kinesin motor domain is found at 49–395; that stretch reads NVQVILRCRP…LDYAHRAKNI (347 aa). 135 to 142 is an ATP binding site; that stretch reads GQTGTGKT. Positions 443–525 form a coiled coil; that stretch reads QEEAEKKAMT…STIKEKEYVI (83 aa).

This sequence belongs to the TRAFAC class myosin-kinesin ATPase superfamily. Kinesin family. KIN-5/BimC subfamily.

Its subcellular location is the cytoplasm. The protein localises to the cytoskeleton. It is found in the spindle. Its function is as follows. Responsible for microtubule translocation. May be important for the organization of phragmoplast-specific arrays of microtubules. Plays an essential role in stabilizing the mitotic spindle. Required during mitotic cytokinesis. The sequence is that of Kinesin-like protein KIN-5A from Oryza sativa subsp. japonica (Rice).